Reading from the N-terminus, the 285-residue chain is Polyamine aminopropyltransferase (285 aa).

In terms of domain architecture, PABS spans 2–237; the sequence is DLWFSESHTP…GYWCFGFASK (236 aa). S-methyl-5'-thioadenosine is bound at residue glutamine 31. Residue aspartate 86 coordinates spermidine. Residues glutamate 106 and 137–138 contribute to the S-methyl-5'-thioadenosine site; that span reads DG. Residue aspartate 155 is the Proton acceptor of the active site.

This sequence belongs to the spermidine/spermine synthase family. In terms of assembly, homodimer or homotetramer.

The protein resides in the cytoplasm. It carries out the reaction S-adenosyl 3-(methylsulfanyl)propylamine + putrescine = S-methyl-5'-thioadenosine + spermidine + H(+). It functions in the pathway amine and polyamine biosynthesis; spermidine biosynthesis; spermidine from putrescine: step 1/1. Catalyzes the irreversible transfer of a propylamine group from the amino donor S-adenosylmethioninamine (decarboxy-AdoMet) to putrescine (1,4-diaminobutane) to yield spermidine. This chain is Polyamine aminopropyltransferase, found in Streptococcus uberis (strain ATCC BAA-854 / 0140J).